We begin with the raw amino-acid sequence, 416 residues long: Enterobactin exporter EntS (416 aa).

Topologically, residues 1-21 (MNKQSWLLNLSLLKTHPAFRA) are cytoplasmic. The chain crosses the membrane as a helical span at residues 22 to 42 (VFLARFISIVSLGLLGVAVPV). The Periplasmic portion of the chain corresponds to 43–55 (QIQIMTHSTWQVG). Residues 56-76 (LSVTLTGGAMFVGLMVGGVLA) form a helical membrane-spanning segment. Residues 77–83 (DRYERKK) are Cytoplasmic-facing. The helical transmembrane segment at 84–104 (VILLARGTCGIGFIGLCLNAL) threads the bilayer. The Periplasmic segment spans residues 105-109 (LPEPS). Residues 110–130 (LLAIYLLGLWDGFFASLGVTA) traverse the membrane as a helical segment. Residues 131-156 (LLAATPALVGRENLMQAGAITMLTVR) are Cytoplasmic-facing. Residues 157–177 (LGSVISPMIGGLLLATGGVAW) traverse the membrane as a helical segment. Asn178 is a topological domain (periplasmic). The chain crosses the membrane as a helical span at residues 179–199 (YGLAAAGTFITLLPLLSLPAL). At 200–218 (PPPPQPREHPLKSLLAGFR) the chain is on the cytoplasmic side. The chain crosses the membrane as a helical span at residues 219–239 (FLLASPLVGGIALLGGLLTMA). The Periplasmic portion of the chain corresponds to 240 to 256 (SAVRVLYPALADNWQMS). Residues 257 to 277 (AAQIGFLYAAIPLGAAIGALT) form a helical membrane-spanning segment. The Cytoplasmic segment spans residues 278 to 287 (SGKLAHSVRP). The chain crosses the membrane as a helical span at residues 288 to 307 (GLLMLLSTLGAFLAIGLFGL). Residues 308-313 (MPMWIL) are Periplasmic-facing. A helical transmembrane segment spans residues 314-336 (GVVCLALFGWLSAVSSLLQYTML). Topologically, residues 337 to 356 (QTQTPEAMLGRINGLWTAQN) are cytoplasmic. A helical transmembrane segment spans residues 357 to 377 (VTGDAIGAALLGGLGAMMTPV). Residue Ala378 is a topological domain, periplasmic. Residues 379–399 (SASASGFGLLIIGVLLLLVLV) form a helical membrane-spanning segment. Topologically, residues 400–416 (ELRRFRQTPPQVTASDS) are cytoplasmic.

It belongs to the major facilitator superfamily. EntS (TC 2.A.1.38) family.

The protein resides in the cell inner membrane. Its function is as follows. Component of an export pathway for enterobactin. The sequence is that of Enterobactin exporter EntS from Escherichia coli O127:H6 (strain E2348/69 / EPEC).